The sequence spans 237 residues: UPF0280 protein Mbur_0309 (237 aa).

This sequence belongs to the UPF0280 family.

This chain is UPF0280 protein Mbur_0309, found in Methanococcoides burtonii (strain DSM 6242 / NBRC 107633 / OCM 468 / ACE-M).